Here is a 185-residue protein sequence, read N- to C-terminus: Glycerol-3-phosphate acyltransferase 4 (185 aa).

6 consecutive transmembrane segments (helical) span residues 1 to 21 (MPLL…AYLA), 47 to 67 (LGRG…SLAI), 69 to 89 (LALA…AAVL), 113 to 133 (LLIA…VLLF), 137 to 157 (VIAA…LYGL), and 158 to 178 (PGGV…THFI).

Belongs to the PlsY family. Probably interacts with PlsX.

It localises to the cell membrane. The catalysed reaction is an acyl phosphate + sn-glycerol 3-phosphate = a 1-acyl-sn-glycero-3-phosphate + phosphate. It functions in the pathway lipid metabolism; phospholipid metabolism. Its function is as follows. Catalyzes the transfer of an acyl group from acyl-phosphate (acyl-PO(4)) to glycerol-3-phosphate (G3P) to form lysophosphatidic acid (LPA). This enzyme utilizes acyl-phosphate as fatty acyl donor, but not acyl-CoA or acyl-ACP. The sequence is that of Glycerol-3-phosphate acyltransferase 4 from Dehalococcoides mccartyi (strain ATCC BAA-2266 / KCTC 15142 / 195) (Dehalococcoides ethenogenes (strain 195)).